The chain runs to 1252 residues: DNA-directed RNA polymerase subunit beta (1252 aa).

Belongs to the RNA polymerase beta chain family. As to quaternary structure, the RNAP catalytic core consists of 2 alpha, 1 beta, 1 beta' and 1 omega subunit. When a sigma factor is associated with the core the holoenzyme is formed, which can initiate transcription.

It catalyses the reaction RNA(n) + a ribonucleoside 5'-triphosphate = RNA(n+1) + diphosphate. Functionally, DNA-dependent RNA polymerase catalyzes the transcription of DNA into RNA using the four ribonucleoside triphosphates as substrates. The polypeptide is DNA-directed RNA polymerase subunit beta (Chlamydia trachomatis serovar D (strain ATCC VR-885 / DSM 19411 / UW-3/Cx)).